The sequence spans 812 residues: Plasminogen (812 aa).

A signal peptide spans 1-19; that stretch reads MDHKEVILLFLLLLKPGQG. One can recognise a PAN domain in the interval 20–98; it reads DSLDGYISTQ…RDVILFEKRV (79 aa). Intrachain disulfides connect Cys49–Cys73, Cys53–Cys61, Cys103–Cys181, Cys124–Cys164, Cys152–Cys176, Cys185–Cys262, Cys188–Cys316, Cys206–Cys245, Cys234–Cys257, Cys275–Cys352, Cys296–Cys335, Cys324–Cys347, Cys377–Cys454, Cys398–Cys437, Cys426–Cys449, Cys481–Cys560, Cys502–Cys543, Cys531–Cys555, Cys568–Cys687, Cys578–Cys586, and Cys609–Cys625. 5 consecutive Kringle domains span residues 103–181, 184–262, 275–352, 377–454, and 481–560; these read CKTG…IPEC, ECMY…IPRC, CLKG…IPSC, CYQS…LKRC, and CMYG…IPLC. The Peptidase S1 domain maps to 582-810; that stretch reads VVGGCVANPH…FVDWIEREMR (229 aa). Ser598 carries the phosphoserine modification. Residues His624 and Asp667 each act as charge relay system in the active site. Ser690 carries the post-translational modification Phosphoserine. 3 disulfide bridges follow: Cys701-Cys768, Cys731-Cys747, and Cys758-Cys786. The active-site Charge relay system is Ser762.

It belongs to the peptidase S1 family. Plasminogen subfamily. In terms of assembly, interacts (both mature PLG and the angiostatin peptide) with AMOT and CSPG4. Interacts (via the Kringle domains) with HRG; the interaction tethers PLG to the cell surface and enhances its activation. Interacts (via Kringle 4 domain) with ADA; the interaction stimulates PLG activation when in complex with DPP4. Angiostatin: Interacts with ATP5F1A; the interaction inhibits most of the angiogenic effects of angiostatin. In terms of processing, in the presence of the inhibitor, the activation involves only cleavage after Arg-581, yielding two chains held together by two disulfide bonds. In the absence of the inhibitor, the activation involves additionally the removal of the activation peptide.

The protein localises to the secreted. It catalyses the reaction Preferential cleavage: Lys-|-Xaa &gt; Arg-|-Xaa, higher selectivity than trypsin. Converts fibrin into soluble products.. With respect to regulation, converted into plasmin by plasminogen activators, both plasminogen and its activator being bound to fibrin. Cannot be activated with streptokinase. Plasmin dissolves the fibrin of blood clots and acts as a proteolytic factor in a variety of other processes including embryonic development, tissue remodeling, tumor invasion, and inflammation. In ovulation, weakens the walls of the Graafian follicle. It activates the urokinase-type plasminogen activator, collagenases and several complement zymogens, such as C1, C4 and C5. Cleavage of fibronectin and laminin leads to cell detachment and apoptosis. Also cleaves fibrin, thrombospondin and von Willebrand factor. Its role in tissue remodeling and tumor invasion may be modulated by CSPG4. Binds to cells. In terms of biological role, angiostatin is an angiogenesis inhibitor that blocks neovascularization and growth of experimental primary and metastatic tumors in vivo. The polypeptide is Plasminogen (Plg) (Mus musculus (Mouse)).